A 297-amino-acid polypeptide reads, in one-letter code: CASP-like protein 2U8 (297 aa).

Residues 1–10 (MLELYEKRRA) are Cytoplasmic-facing. Residues 11 to 31 (LLLLRLAAMFLSLAALLITVL) form a helical membrane-spanning segment. Residues 32-64 (NREDGFFSINVFGSPQPILAKATADFTLVKGLK) lie on the Extracellular side of the membrane. A helical membrane pass occupies residues 65-85 (FFAGAMGIVAGYSFLQLAIAM). At 86–101 (ASIFSGAPSILGGKRM) the chain is on the cytoplasmic side. Residues 102–122 (AWLCFVGDMTASHLCAAAAAV) form a helical membrane-spanning segment. At 123–148 (SAQLAYLGKRGAPMWSAVCTYFSHYC) the chain is on the extracellular side. The helical transmembrane segment at 149 to 169 (LVFGLAVILAFLATLAALLVA) threads the bilayer. The Cytoplasmic segment spans residues 170-297 (SISSYHLAYD…RVLEMETPCK (128 aa)).

This sequence belongs to the Casparian strip membrane proteins (CASP) family. As to quaternary structure, homodimer and heterodimers.

The protein localises to the cell membrane. In Selaginella moellendorffii (Spikemoss), this protein is CASP-like protein 2U8.